Reading from the N-terminus, the 968-residue chain is RNA polymerase-associated protein RapA (968 aa).

One can recognise a Helicase ATP-binding domain in the interval 163 to 332 (EVGRRFAPRV…FARLRLLDPD (170 aa)). 176–183 (DEVGLGKT) is an ATP binding site. The DEAH box signature appears at 278-281 (DEAH). In terms of domain architecture, Helicase C-terminal spans 491 to 641 (RVDWLINFLK…AFEQTCPSGH (151 aa)).

The protein belongs to the SNF2/RAD54 helicase family. RapA subfamily. Interacts with the RNAP. Has a higher affinity for the core RNAP than for the holoenzyme. Its ATPase activity is stimulated by binding to RNAP.

Functionally, transcription regulator that activates transcription by stimulating RNA polymerase (RNAP) recycling in case of stress conditions such as supercoiled DNA or high salt concentrations. Probably acts by releasing the RNAP, when it is trapped or immobilized on tightly supercoiled DNA. Does not activate transcription on linear DNA. Probably not involved in DNA repair. The polypeptide is RNA polymerase-associated protein RapA (Shewanella sediminis (strain HAW-EB3)).